We begin with the raw amino-acid sequence, 343 residues long: Holliday junction branch migration complex subunit RuvB (343 aa).

The segment at 1 to 185 (MEQEDFNIRE…FGINLHLEYY (185 aa)) is large ATPase domain (RuvB-L). ATP-binding positions include Leu24, Arg25, Gly66, Lys69, Thr70, Thr71, 132–134 (EDY), Arg175, Tyr185, and Arg222. A Mg(2+)-binding site is contributed by Thr70. Residues 186-256 (DDDILSNIIR…IAQFALEALN (71 aa)) are small ATPAse domain (RuvB-S). Residues 259-343 (KYGLDEIDNK…YSSQKTLFND (85 aa)) form a head domain (RuvB-H) region. Arg314 and Arg319 together coordinate DNA.

Belongs to the RuvB family. As to quaternary structure, homohexamer. Forms an RuvA(8)-RuvB(12)-Holliday junction (HJ) complex. HJ DNA is sandwiched between 2 RuvA tetramers; dsDNA enters through RuvA and exits via RuvB. An RuvB hexamer assembles on each DNA strand where it exits the tetramer. Each RuvB hexamer is contacted by two RuvA subunits (via domain III) on 2 adjacent RuvB subunits; this complex drives branch migration. In the full resolvosome a probable DNA-RuvA(4)-RuvB(12)-RuvC(2) complex forms which resolves the HJ.

The protein localises to the cytoplasm. The catalysed reaction is ATP + H2O = ADP + phosphate + H(+). Functionally, the RuvA-RuvB-RuvC complex processes Holliday junction (HJ) DNA during genetic recombination and DNA repair, while the RuvA-RuvB complex plays an important role in the rescue of blocked DNA replication forks via replication fork reversal (RFR). RuvA specifically binds to HJ cruciform DNA, conferring on it an open structure. The RuvB hexamer acts as an ATP-dependent pump, pulling dsDNA into and through the RuvAB complex. RuvB forms 2 homohexamers on either side of HJ DNA bound by 1 or 2 RuvA tetramers; 4 subunits per hexamer contact DNA at a time. Coordinated motions by a converter formed by DNA-disengaged RuvB subunits stimulates ATP hydrolysis and nucleotide exchange. Immobilization of the converter enables RuvB to convert the ATP-contained energy into a lever motion, pulling 2 nucleotides of DNA out of the RuvA tetramer per ATP hydrolyzed, thus driving DNA branch migration. The RuvB motors rotate together with the DNA substrate, which together with the progressing nucleotide cycle form the mechanistic basis for DNA recombination by continuous HJ branch migration. Branch migration allows RuvC to scan DNA until it finds its consensus sequence, where it cleaves and resolves cruciform DNA. This is Holliday junction branch migration complex subunit RuvB from Bacteroides thetaiotaomicron (strain ATCC 29148 / DSM 2079 / JCM 5827 / CCUG 10774 / NCTC 10582 / VPI-5482 / E50).